The chain runs to 427 residues: Adenylosuccinate synthetase (427 aa).

GTP is bound by residues 12–18 (GDEGKGK) and 40–42 (GHT). Catalysis depends on aspartate 13, which acts as the Proton acceptor. Mg(2+)-binding residues include aspartate 13 and glycine 40. Residues 13 to 16 (DEGK), 38 to 41 (NAGH), threonine 126, arginine 140, glutamine 221, threonine 236, and arginine 299 each bind IMP. The Proton donor role is filled by histidine 41. Residue 295 to 301 (STTKRPR) participates in substrate binding. GTP-binding positions include arginine 301, 327–329 (KLD), and 409–411 (SVG).

This sequence belongs to the adenylosuccinate synthetase family. Homodimer. Mg(2+) serves as cofactor.

The protein resides in the cytoplasm. It carries out the reaction IMP + L-aspartate + GTP = N(6)-(1,2-dicarboxyethyl)-AMP + GDP + phosphate + 2 H(+). Its pathway is purine metabolism; AMP biosynthesis via de novo pathway; AMP from IMP: step 1/2. Functionally, plays an important role in the de novo pathway of purine nucleotide biosynthesis. Catalyzes the first committed step in the biosynthesis of AMP from IMP. The protein is Adenylosuccinate synthetase of Borrelia recurrentis (strain A1).